The sequence spans 107 residues: Large ribosomal subunit protein uL23 (107 aa).

The protein belongs to the universal ribosomal protein uL23 family. In terms of assembly, part of the 50S ribosomal subunit. Contacts protein L29, and trigger factor when it is bound to the ribosome.

In terms of biological role, one of the early assembly proteins it binds 23S rRNA. One of the proteins that surrounds the polypeptide exit tunnel on the outside of the ribosome. Forms the main docking site for trigger factor binding to the ribosome. In Gluconobacter oxydans (strain 621H) (Gluconobacter suboxydans), this protein is Large ribosomal subunit protein uL23.